A 306-amino-acid chain; its full sequence is Ubiquitin-conjugating enzyme E2Q-like protein CG4502 (306 aa).

The disordered stretch occupies residues 18–77 (HKSSNNNNNNNNNHNNNINNNNNNDKVDGATGSSPNINNNNNNNNNNNNHDGAAAPSSAG). 2 stretches are compositionally biased toward low complexity: residues 22 to 41 (NNNN…NNNN) and 53 to 77 (NINN…SSAG). Positions 138 to 299 (IRTRRLMKEY…VKTHEKYGWV (162 aa)) constitute a UBC core domain. Cys234 functions as the Glycyl thioester intermediate in the catalytic mechanism.

This sequence belongs to the ubiquitin-conjugating enzyme family.

The catalysed reaction is S-ubiquitinyl-[E1 ubiquitin-activating enzyme]-L-cysteine + [E2 ubiquitin-conjugating enzyme]-L-cysteine = [E1 ubiquitin-activating enzyme]-L-cysteine + S-ubiquitinyl-[E2 ubiquitin-conjugating enzyme]-L-cysteine.. The protein operates within protein modification; protein ubiquitination. Catalyzes the covalent attachment of ubiquitin to other proteins. This chain is Ubiquitin-conjugating enzyme E2Q-like protein CG4502, found in Drosophila melanogaster (Fruit fly).